A 64-amino-acid polypeptide reads, in one-letter code: Large ribosomal subunit protein bL35 (64 aa).

A disordered region spans residues M1 to K54. A compositionally biased stretch (basic residues) spans K12–R44.

This sequence belongs to the bacterial ribosomal protein bL35 family.

The polypeptide is Large ribosomal subunit protein bL35 (Chromohalobacter salexigens (strain ATCC BAA-138 / DSM 3043 / CIP 106854 / NCIMB 13768 / 1H11)).